The following is a 736-amino-acid chain: Polyribonucleotide nucleotidyltransferase (736 aa).

2 residues coordinate Mg(2+): D493 and D499. Residues 560-619 (PQHAELVVNPDAIRMIIGPGGKNIKQITTVTGAAIDINDSGKISIFAPTSEAMEQAKQMI) enclose the KH domain. In terms of domain architecture, S1 motif spans 629 to 703 (GKNYKGKVRK…SRKAVLLEEE (75 aa)). A disordered region spans residues 710–736 (EESSRFSKGNRNGDRSRHNNRERTRRT). Residues 720–736 (RNGDRSRHNNRERTRRT) are compositionally biased toward basic and acidic residues.

Belongs to the polyribonucleotide nucleotidyltransferase family. It depends on Mg(2+) as a cofactor.

It is found in the cytoplasm. It catalyses the reaction RNA(n+1) + phosphate = RNA(n) + a ribonucleoside 5'-diphosphate. Its function is as follows. Involved in mRNA degradation. Catalyzes the phosphorolysis of single-stranded polyribonucleotides processively in the 3'- to 5'-direction. This is Polyribonucleotide nucleotidyltransferase from Lawsonia intracellularis (strain PHE/MN1-00).